The primary structure comprises 171 residues: 3-hydroxydecanoyl-[acyl-carrier-protein] dehydratase (171 aa).

Residue histidine 70 is part of the active site.

Belongs to the thioester dehydratase family. FabA subfamily. Homodimer.

The protein localises to the cytoplasm. It carries out the reaction a (3R)-hydroxyacyl-[ACP] = a (2E)-enoyl-[ACP] + H2O. It catalyses the reaction (3R)-hydroxydecanoyl-[ACP] = (2E)-decenoyl-[ACP] + H2O. The enzyme catalyses (2E)-decenoyl-[ACP] = (3Z)-decenoyl-[ACP]. It functions in the pathway lipid metabolism; fatty acid biosynthesis. In terms of biological role, necessary for the introduction of cis unsaturation into fatty acids. Catalyzes the dehydration of (3R)-3-hydroxydecanoyl-ACP to E-(2)-decenoyl-ACP and then its isomerization to Z-(3)-decenoyl-ACP. Can catalyze the dehydratase reaction for beta-hydroxyacyl-ACPs with saturated chain lengths up to 16:0, being most active on intermediate chain length. This is 3-hydroxydecanoyl-[acyl-carrier-protein] dehydratase from Pseudomonas fluorescens (strain Pf0-1).